Consider the following 421-residue polypeptide: ATP-dependent RNA helicase RhlB (421 aa).

The Q motif motif lies at 9–37 (QKFSDFALHPKVIEALENKGFHNCTPIQA). Positions 40–219 (LPLTLAGRDV…FEQMNNAEYV (180 aa)) constitute a Helicase ATP-binding domain. 53 to 60 (AQTGTGKT) serves as a coordination point for ATP. The DEAD box motif lies at 165–168 (DEAD). The 146-residue stretch at 245-390 (RLLQTLIEEE…VSKYNPEALM (146 aa)) folds into the Helicase C-terminal domain. Residues 393-421 (LPKPLRLTRSRPGNGPRRTGAPRNRRRSG) form a disordered region. The span at 403–414 (RPGNGPRRTGAP) shows a compositional bias: low complexity.

It belongs to the DEAD box helicase family. RhlB subfamily. As to quaternary structure, component of the RNA degradosome, which is a multiprotein complex involved in RNA processing and mRNA degradation.

Its subcellular location is the cytoplasm. The enzyme catalyses ATP + H2O = ADP + phosphate + H(+). In terms of biological role, DEAD-box RNA helicase involved in RNA degradation. Has RNA-dependent ATPase activity and unwinds double-stranded RNA. This Citrobacter koseri (strain ATCC BAA-895 / CDC 4225-83 / SGSC4696) protein is ATP-dependent RNA helicase RhlB.